A 568-amino-acid chain; its full sequence is Delta 8-(E)-sphingolipid desaturase (568 aa).

One can recognise a Cytochrome b5 heme-binding domain in the interval 2–77 (DNIISRGEIE…FRKWRIGRID (76 aa)). Heme is bound by residues histidine 37 and histidine 60. Transmembrane regions (helical) follow at residues 241–261 (FWSA…AHDA) and 272–292 (LDNI…LGWW). A Histidine box-1 motif is present at residues 259–263 (HDAGH). Residues 296–300 (HNVHH) carry the Histidine box-2 motif. Helical transmembrane passes span 352 to 377 (YLYY…LLGL), 389 to 409 (YFEL…LVGC), and 421 to 441 (IMVS…SHFA). Positions 480 to 484 (QVVHH) match the Histidine box-3 motif. Residues 549–560 (ATGEREADEKTY) show a composition bias toward basic and acidic residues. Residues 549-568 (ATGEREADEKTYRTKSIKNA) are disordered.

This sequence belongs to the fatty acid desaturase type 1 family.

It is found in the membrane. It catalyses the reaction an N-acylsphing-4-enine + 2 Fe(II)-[cytochrome b5] + O2 + 2 H(+) = a (4E,8E)-4-sphinga-4,8-dienine ceramide + 2 Fe(III)-[cytochrome b5] + 2 H2O. It functions in the pathway lipid metabolism; sphingolipid metabolism. Delta(8)-fatty-acid desaturase which introduces a double bond at the 8-position in the long-chain base (LCB) of ceramides. Required for the formation of the di-unsaturated sphingoid base (E,E)-sphinga-4,8-dienine during glucosylceramide (GluCer) biosynthesis. The sequence is that of Delta 8-(E)-sphingolipid desaturase from Lachancea kluyveri (strain ATCC 58438 / CBS 3082 / BCRC 21498 / NBRC 1685 / JCM 7257 / NCYC 543 / NRRL Y-12651) (Yeast).